The sequence spans 72 residues: Aurein-2.5 (72 aa).

A signal peptide spans 1–22 (MAFLKKSLFLVLFLGLVSLSIC). The propeptide occupies 23–49 (EKEKRQNEEDEDENEAANHEEGSEEKR). A disordered region spans residues 27–47 (RQNEEDEDENEAANHEEGSEE). Basic and acidic residues predominate over residues 38 to 47 (AANHEEGSEE). L65 bears the Leucine amide mark. Residues 69-72 (NDLE) constitute a propeptide that is removed on maturation.

This sequence belongs to the frog skin active peptide (FSAP) family. Aurein subfamily. As to quaternary structure, may be monomeric or may oligomerize as homodimers or homotrimers in Gram-positive and Gram-negative bacteria mimetic membranes. C-terminal amidation enhances antibacterial activity. This increase may be due to stabilization of the alpha-helical structure at the membrane interface. In terms of tissue distribution, expressed by the skin dorsal glands.

The protein localises to the secreted. The protein resides in the target cell membrane. Amphipathic alpha-helical antimicrobial peptide with moderate to potent activity against Gram-positive bacteria, Gram-negative bacteria and fungi. Also shows a weak activity against biofilm of both Gram-positive and Gram-negative bacteria. Probably acts by disturbing membrane functions with its amphipathic structure. Kills fungi via membranolytic action. Enhanced sterol levels in lipid composition membranes reduce interaction of this peptide with membranes, having a protective effect against the lytic ability of the peptide. Shows anticancer activity. This chain is Aurein-2.5, found in Ranoidea aurea (Green and golden bell frog).